The sequence spans 340 residues: Dihydroorotate dehydrogenase (quinone) (340 aa).

Residues 65-69 (AGADK) and Thr89 contribute to the FMN site. Residue Lys69 participates in substrate binding. 114–118 (NRNGF) is a substrate binding site. Positions 142 and 175 each coordinate FMN. Asn175 provides a ligand contact to substrate. The active-site Nucleophile is Ser178. Residue Asn180 coordinates substrate. The FMN site is built by Lys220 and Thr248. Residue 249 to 250 (NT) coordinates substrate. FMN is bound by residues Gly271, Gly300, and 321–322 (YS).

It belongs to the dihydroorotate dehydrogenase family. Type 2 subfamily. In terms of assembly, monomer. Requires FMN as cofactor.

The protein resides in the cell membrane. The enzyme catalyses (S)-dihydroorotate + a quinone = orotate + a quinol. Its pathway is pyrimidine metabolism; UMP biosynthesis via de novo pathway; orotate from (S)-dihydroorotate (quinone route): step 1/1. Its function is as follows. Catalyzes the conversion of dihydroorotate to orotate with quinone as electron acceptor. The polypeptide is Dihydroorotate dehydrogenase (quinone) (Mannheimia succiniciproducens (strain KCTC 0769BP / MBEL55E)).